The following is a 633-amino-acid chain: Threonine--tRNA ligase (633 aa).

Residues 1 to 59 (MIKVTFLAEQKVKEYSGRVTGFDILQPDALREAIAFKVNGELYDLSREIESDTEIEVIQ) form the TGS domain. The catalytic stretch occupies residues 240 to 532 (DHRKIAKDMD…LIENYAGKFP (293 aa)). Residues Cys-332, His-383, and His-509 each contribute to the Zn(2+) site.

The protein belongs to the class-II aminoacyl-tRNA synthetase family. In terms of assembly, homodimer. Zn(2+) is required as a cofactor.

The protein localises to the cytoplasm. It carries out the reaction tRNA(Thr) + L-threonine + ATP = L-threonyl-tRNA(Thr) + AMP + diphosphate + H(+). Its function is as follows. Catalyzes the attachment of threonine to tRNA(Thr) in a two-step reaction: L-threonine is first activated by ATP to form Thr-AMP and then transferred to the acceptor end of tRNA(Thr). Also edits incorrectly charged L-seryl-tRNA(Thr). The polypeptide is Threonine--tRNA ligase (Wolbachia pipientis subsp. Culex pipiens (strain wPip)).